The following is a 391-amino-acid chain: Inhibin beta B chain (391 aa).

The first 25 residues, 1–25 (MDGAARRGVLAALLACGLLLLGAAA), serve as a signal peptide directing secretion. Positions 26–276 (TPTPPPAGSS…ADNKHRIRKR (251 aa)) are excised as a propeptide. The segment at 27-47 (PTPPPAGSSPQDTCTSCGFRR) is disordered. Residue Asn-77 is glycosylated (N-linked (GlcNAc...) asparagine). 4 cysteine pairs are disulfide-bonded: Cys-280/Cys-288, Cys-287/Cys-356, Cys-316/Cys-388, and Cys-320/Cys-390.

It belongs to the TGF-beta family. Dimeric, linked by one or more disulfide bonds. Inhibin A is a dimer of alpha and beta-A. Inhibin B is a dimer of alpha and beta-B. Activin A is a homodimer of beta-A. Activin B is a homodimer of beta-B. Activin AB is a dimer of beta-A and beta-B.

The protein localises to the secreted. Functionally, inhibins and activins inhibit and activate, respectively, the secretion of follitropin by the pituitary gland. Inhibins/activins are involved in regulating a number of diverse functions such as hypothalamic and pituitary hormone secretion, gonadal hormone secretion, germ cell development and maturation, erythroid differentiation, insulin secretion, nerve cell survival, embryonic axial development or bone growth, depending on their subunit composition. Inhibins appear to oppose the functions of activins. The polypeptide is Inhibin beta B chain (INHBB) (Gallus gallus (Chicken)).